The chain runs to 648 residues: Nucleoside triphosphatase I (648 aa).

The region spanning Phe48–Asn212 is the Helicase ATP-binding domain. An ATP-binding site is contributed by Trp61–Thr68. The short motif at Asp150–His153 is the DEXH box element. The region spanning Tyr378 to Lys541 is the Helicase C-terminal domain. The segment at Asp467 to Ile533 is binding to the cap-specific mRNA (nucleoside-2'-O-)-methyltransferase.

It belongs to the helicase family. NPH I subfamily. Monomer. Interacts (via C-terminus) with RAP94 (via N-terminus). Interacts with the cap-specific mRNA (nucleoside-2'-O-)-methyltransferase.

The protein localises to the virion. It carries out the reaction a ribonucleoside 5'-triphosphate + H2O = a ribonucleoside 5'-diphosphate + phosphate + H(+). DNA-dependent ATPase required for providing the needed energy to achieve the termination of early transcripts. Acts in concert with the RAP94 subunit of the virion RNA polymerase and the capping enzyme/VTF to catalyze release of UUUUUNU-containing nascent RNA from the elongation complex. NPH-I must bind ssDNA in order to exhibit ATPase activity. The protein is Nucleoside triphosphatase I (NPH1) of Amsacta (AmEPV).